Here is a 263-residue protein sequence, read N- to C-terminus: Proliferating cell nuclear antigen (263 aa).

The DNA-binding element occupies 61-80; that stretch reads RCDRTINLGLSLANMSKALK.

The protein belongs to the PCNA family. In terms of assembly, homotrimer. Forms a complex with activator 1 heteropentamer in the presence of ATP.

The protein resides in the nucleus. This protein is an auxiliary protein of DNA polymerase delta and is involved in the control of eukaryotic DNA replication by increasing the polymerase's processibility during elongation of the leading strand. The protein is Proliferating cell nuclear antigen (pcn-1) of Caenorhabditis elegans.